The chain runs to 261 residues: Ribonuclease HII (261 aa).

Residues lysine 71–serine 259 enclose the RNase H type-2 domain. Residues aspartate 77, glutamate 78, and aspartate 169 each coordinate a divalent metal cation.

The protein belongs to the RNase HII family. Requires Mn(2+) as cofactor. It depends on Mg(2+) as a cofactor.

Its subcellular location is the cytoplasm. The enzyme catalyses Endonucleolytic cleavage to 5'-phosphomonoester.. Its function is as follows. Endonuclease that specifically degrades the RNA of RNA-DNA hybrids. The chain is Ribonuclease HII from Listeria monocytogenes serovar 1/2a (strain ATCC BAA-679 / EGD-e).